A 303-amino-acid polypeptide reads, in one-letter code: Glutathione transport system permease protein GsiD (303 aa).

7 consecutive transmembrane segments (helical) span residues glutamine 37–alanine 57, leucine 105–leucine 125, leucine 144–isoleucine 164, alanine 165–glycine 185, threonine 208–methionine 228, isoleucine 230–proline 250, and valine 266–phenylalanine 286. One can recognise an ABC transmembrane type-1 domain in the interval alanine 101–glycine 290.

The protein belongs to the binding-protein-dependent transport system permease family. The complex is composed of two ATP-binding proteins (GsiA), two transmembrane proteins (GsiC and GsiD) and a solute-binding protein (GsiB).

Its subcellular location is the cell inner membrane. Part of the ABC transporter complex GsiABCD involved in glutathione import. Probably responsible for the translocation of the substrate across the membrane. The polypeptide is Glutathione transport system permease protein GsiD (Salmonella paratyphi A (strain ATCC 9150 / SARB42)).